Consider the following 242-residue polypeptide: Sugar fermentation stimulation protein homolog (242 aa).

This sequence belongs to the SfsA family.

The sequence is that of Sugar fermentation stimulation protein homolog from Rippkaea orientalis (strain PCC 8801 / RF-1) (Cyanothece sp. (strain PCC 8801)).